The sequence spans 376 residues: UPF0754 membrane protein BH1148 (376 aa).

The next 2 membrane-spanning stretches (helical) occupy residues 3 to 23 (LILFMIVIGAVIGGVTNSLAI) and 355 to 375 (YLGALLGGGIGLVQSLIILLI).

It belongs to the UPF0754 family.

The protein localises to the cell membrane. The polypeptide is UPF0754 membrane protein BH1148 (Halalkalibacterium halodurans (strain ATCC BAA-125 / DSM 18197 / FERM 7344 / JCM 9153 / C-125) (Bacillus halodurans)).